The primary structure comprises 359 residues: Phospho-N-acetylmuramoyl-pentapeptide-transferase (359 aa).

The next 10 membrane-spanning stretches (helical) occupy residues 3–23 (QILV…PALI), 55–75 (VAIV…GLAF), 80–100 (VSAS…VGFL), 117–137 (TAKT…VLQF), 156–176 (IATV…IVSA), 187–207 (LDGL…LITF), 231–251 (LTLI…WNAA), 255–275 (IFMG…LSVT), 280–300 (ILAV…VLQI), and 334–354 (FWLL…GEWL).

Belongs to the glycosyltransferase 4 family. MraY subfamily. Requires Mg(2+) as cofactor.

It is found in the cell membrane. It carries out the reaction UDP-N-acetyl-alpha-D-muramoyl-L-alanyl-gamma-D-glutamyl-meso-2,6-diaminopimeloyl-D-alanyl-D-alanine + di-trans,octa-cis-undecaprenyl phosphate = di-trans,octa-cis-undecaprenyl diphospho-N-acetyl-alpha-D-muramoyl-L-alanyl-D-glutamyl-meso-2,6-diaminopimeloyl-D-alanyl-D-alanine + UMP. It participates in cell wall biogenesis; peptidoglycan biosynthesis. Its function is as follows. Catalyzes the initial step of the lipid cycle reactions in the biosynthesis of the cell wall peptidoglycan: transfers peptidoglycan precursor phospho-MurNAc-pentapeptide from UDP-MurNAc-pentapeptide onto the lipid carrier undecaprenyl phosphate, yielding undecaprenyl-pyrophosphoryl-MurNAc-pentapeptide, known as lipid I. This chain is Phospho-N-acetylmuramoyl-pentapeptide-transferase, found in Mycobacterium leprae (strain TN).